Here is a 134-residue protein sequence, read N- to C-terminus: Large ribosomal subunit protein mL41 (134 aa).

A mitochondrion-targeting transit peptide spans 1–13 (MGFLTAVTQGLVR).

The protein belongs to the mitochondrion-specific ribosomal protein mL41 family. As to quaternary structure, component of the mitochondrial ribosome large subunit (39S) which comprises a 16S rRNA and about 50 distinct proteins. Interacts with BCL2. Was also identified in the 28S mitochondrial ribosome.

The protein resides in the mitochondrion. Functionally, component of the mitochondrial ribosome large subunit. Also involved in apoptosis and cell cycle. Enhances p53/TP53 stability, thereby contributing to p53/TP53-induced apoptosis in response to growth-inhibitory condition. Enhances p53/TP53 translocation to the mitochondria. Has the ability to arrest the cell cycle at the G1 phase, possibly by stabilizing the CDKN1A and CDKN1B (p27Kip1) proteins. The protein is Large ribosomal subunit protein mL41 (Mrpl41) of Rattus norvegicus (Rat).